A 443-amino-acid polypeptide reads, in one-letter code: 23S rRNA (uracil(1939)-C(5))-methyltransferase RlmD (443 aa).

The 63-residue stretch at 4–66 (QNRFDRTSFQ…RHFDEARVVE (63 aa)) folds into the TRAM domain. Cys79, Cys85, Cys88, and Cys167 together coordinate [4Fe-4S] cluster. The S-adenosyl-L-methionine site is built by Gln275, Phe304, Asn309, Glu325, Asp352, and Asp373. Cys399 (nucleophile) is an active-site residue.

It belongs to the class I-like SAM-binding methyltransferase superfamily. RNA M5U methyltransferase family. RlmD subfamily.

The catalysed reaction is uridine(1939) in 23S rRNA + S-adenosyl-L-methionine = 5-methyluridine(1939) in 23S rRNA + S-adenosyl-L-homocysteine + H(+). Catalyzes the formation of 5-methyl-uridine at position 1939 (m5U1939) in 23S rRNA. The polypeptide is 23S rRNA (uracil(1939)-C(5))-methyltransferase RlmD (Xylella fastidiosa (strain Temecula1 / ATCC 700964)).